A 283-amino-acid chain; its full sequence is Thymidylate synthase (283 aa).

A dUMP-binding site is contributed by Arg22. The active-site Nucleophile is Cys160. DUMP is bound by residues 180–183, Asn191, and 221–223; these read RSCD and HIY. Residue Asp183 coordinates (6R)-5,10-methylene-5,6,7,8-tetrahydrofolate. Position 282 (Ser282) interacts with (6R)-5,10-methylene-5,6,7,8-tetrahydrofolate.

This sequence belongs to the thymidylate synthase family. Bacterial-type ThyA subfamily. Homodimer.

It localises to the cytoplasm. The enzyme catalyses dUMP + (6R)-5,10-methylene-5,6,7,8-tetrahydrofolate = 7,8-dihydrofolate + dTMP. The protein operates within pyrimidine metabolism; dTTP biosynthesis. Catalyzes the reductive methylation of 2'-deoxyuridine-5'-monophosphate (dUMP) to 2'-deoxythymidine-5'-monophosphate (dTMP) while utilizing 5,10-methylenetetrahydrofolate (mTHF) as the methyl donor and reductant in the reaction, yielding dihydrofolate (DHF) as a by-product. This enzymatic reaction provides an intracellular de novo source of dTMP, an essential precursor for DNA biosynthesis. The sequence is that of Thymidylate synthase from Marinomonas sp. (strain MWYL1).